We begin with the raw amino-acid sequence, 1400 residues long: S phase cyclin A-associated protein in the endoplasmic reticulum (1400 aa).

4 disordered regions span residues 36–61, 226–277, 517–550, and 701–723; these read ESKD…GTHK, VKAH…IRSR, PARP…HEEK, and RIEQ…RARD. Residues 231-243 show a composition bias toward polar residues; it reads TGSTASSEITPAQ. Over residues 539-550 the composition is skewed to basic and acidic residues; sequence TIAESKKKHEEK. A C2H2-type zinc finger spans residues 792-816; it reads KQCSLCNVLISSEVYLFSHVKGRKH. Position 832 is a phosphoserine (Ser832).

As to quaternary structure, interacts with CCNA2/CDK2 complex, but not with CCNA2/CDC2, CCNB1/CDC2 or CCNE1/CDK2 complexes, at multiple phases of the cell cycle, including S and G2/M. Phosphorylated in vitro by the CCNA2/CDK2 complex. Widely expressed with high expression in testis. Isoform 1 is detected in various tissues, including retina, fetal and adult brain. Isoform 2 is expressed in the retina at high levels, and in the brain at very low levels.

It localises to the endoplasmic reticulum. It is found in the nucleus. In terms of biological role, CCNA2/CDK2 regulatory protein that transiently maintains CCNA2 in the cytoplasm. This Homo sapiens (Human) protein is S phase cyclin A-associated protein in the endoplasmic reticulum.